Here is a 504-residue protein sequence, read N- to C-terminus: Glucan endo-1,3-beta-glucosidase 7 (504 aa).

The signal sequence occupies residues 1-22 (MALSISIYFLLIFLSHFPSSHA). Glu-119 acts as the Proton donor in catalysis. Residue Glu-264 is the Nucleophile of the active site. Residues Cys-365 and Cys-427 are joined by a disulfide bond.

It belongs to the glycosyl hydrolase 17 family. Contains two additional disulfide bonds.

The protein localises to the secreted. It is found in the cell wall. The catalysed reaction is Hydrolysis of (1-&gt;3)-beta-D-glucosidic linkages in (1-&gt;3)-beta-D-glucans.. The sequence is that of Glucan endo-1,3-beta-glucosidase 7 from Arabidopsis thaliana (Mouse-ear cress).